We begin with the raw amino-acid sequence, 2310 residues long: Retinal-specific phospholipid-transporting ATPase ABCA4 (2310 aa).

The Cytoplasmic segment spans residues 1-21 (MGFLRQIQLLLWKNWTLRKRQ). A helical transmembrane segment spans residues 22 to 42 (KIRFVVELVWPLSLFLVLIWL). The Extracellular segment spans residues 43–646 (RNANPLYSQH…MPYPCFVDDS (604 aa)). Intrachain disulfides connect cysteine 54–cysteine 81 and cysteine 75–cysteine 324. Asparagine 98 is a glycosylation site (N-linked (GlcNAc...) asparagine). Residues serine 336 and asparagine 338 each contribute to the Mg(2+) site. Cysteine 370 and cysteine 519 form a disulfide bridge. N-linked (GlcNAc...) asparagine glycans are attached at residues asparagine 415 and asparagine 504. The an N-all-trans-retinylidenephosphatidylethanolamine site is built by arginine 587 and arginine 653. Disulfide bonds link cysteine 641–cysteine 1489, cysteine 1443–cysteine 1454, and cysteine 1487–cysteine 1501. The chain crosses the membrane as a helical span at residues 647–667 (FMIILNRCFPIFMVLAWIYSV). Topologically, residues 668–699 (SMTVKGIVLEKELRLKETLKNQGVSNAVIWCT) are cytoplasmic. A helical transmembrane segment spans residues 700-720 (WFLDSFSIMALSIFLLTLFIM). At 721–730 (HGRILHYSDP) the chain is on the extracellular side. A helical transmembrane segment spans residues 731–751 (FILFLFLLAFATATIMQSFLL). Residues 752 to 759 (STLFSKAS) are Cytoplasmic-facing. Residues 760 to 780 (LAAACSGVIYFTLYLPHVLCF) traverse the membrane as a helical segment. The Extracellular segment spans residues 781-835 (AWQDRMTADLKTTVSLLSSVAFGFGTEYLVRFEEQGLGLQWSNIGKSPLEGDEFS). Residues 836-856 (FLLSMKMMLLDAALYGLLAWY) form a helical membrane-spanning segment. The Cytoplasmic portion of the chain corresponds to 857–1375 (LDQVFPGDYG…IRSRKDFVAQ (519 aa)). Residues 891 to 910 (ERALEKTEPLTEEMEDPEHP) are disordered. A Phosphothreonine modification is found at threonine 901. The ABC transporter 1 domain maps to 929–1160 (VCVKNLVKVF…FGTGFYLTLV (232 aa)). Positions 938, 966, and 969 each coordinate ATP. Threonine 970 is a Mg(2+) binding site. ATP contacts are provided by threonine 971, glutamine 1010, lysine 1054, glycine 1064, glycine 1065, and histidine 1118. Phosphoserine is present on serine 1185. The interval 1311-1344 (RQYAQAPHTCSPGQVDPPKGQPSPEPEDPGVPFN) is disordered. Residues 1376–1396 (IVLPATFVFLALMLSIIVPPF) traverse the membrane as a helical segment. The Extracellular portion of the chain corresponds to 1397–1726 (GEFPALTLHP…VSPTTYWLTN (330 aa)). A glycan (N-linked (GlcNAc...) asparagine) is linked at asparagine 1468. N-linked (GlcNAc...) asparagine glycans are attached at residues asparagine 1528, asparagine 1587, and asparagine 1661. A helical membrane pass occupies residues 1727-1747 (FLWDIMNYAVSAGLVVGIFIG). Topologically, residues 1748–1758 (FQKKAYTSPDN) are cytoplasmic. A helical transmembrane segment spans residues 1759–1779 (LPALVSLLMLYGWAVIPMMYP). Residues 1780-1791 (ASFLFEVPSTAY) lie on the Extracellular side of the membrane. The helical transmembrane segment at 1792-1812 (VALSCANLFIGINSSAITFVL) threads the bilayer. The Cytoplasmic segment spans residues 1813 to 1830 (ELFENNRTLLRFNAMLRK). Residues 1831–1851 (LLIVFPHFCLGRGLIDLALSQ) traverse the membrane as a helical segment. Topologically, residues 1852–1872 (AVTDVYAQFGEEYSANPFQWD) are extracellular. A helical membrane pass occupies residues 1873–1893 (LIGKNLVAMAIEGVVYFLLTL). Residues 1894-2310 (LIQHHFFLTR…AEDKHTRSPQ (417 aa)) are Cytoplasmic-facing. One can recognise an ABC transporter 2 domain in the interval 1937–2169 (LKLNELTKVY…FGDGYIVTMK (233 aa)). Residues asparagine 1973, glycine 1974, lysine 1977, threonine 1978, threonine 1979, and glycine 2072 each contribute to the ATP site. Threonine 1978 is a binding site for Mg(2+). Residues 2243–2248 (VFVNFA) are essential for ATP binding and ATPase activity. The interval 2266-2310 (ASWQAKLEEKSGRLQTQEPLPAGSEQLANGSNPTAAEDKHTRSPQ) is disordered. Residues 2301 to 2310 (AEDKHTRSPQ) show a composition bias toward basic and acidic residues.

The protein belongs to the ABC transporter superfamily. ABCA family. N-glycosylated. Post-translationally, proteolytic cleavage by trypsin leads to a 120-kDa N-terminal fragment and a 115-kDa C-terminal fragment that are linked through disulfide bonds. In terms of processing, phosphorylation is independent of light exposure and modulates ATPase activity. In terms of tissue distribution, retinal-specific. Seems to be exclusively found in the rims of rod photoreceptor cells.

The protein localises to the membrane. The protein resides in the endoplasmic reticulum. It localises to the cell projection. Its subcellular location is the cilium. It is found in the photoreceptor outer segment. It catalyses the reaction an N-all-trans-retinylidenephosphatidylethanolamine(out) + ATP + H2O = an N-all-trans-retinylidenephosphatidylethanolamine(in) + ADP + phosphate + H(+). It carries out the reaction ATP + H2O + phospholipidSide 1 = ADP + phosphate + phospholipidSide 2.. The enzyme catalyses a 1,2-diacyl-sn-glycero-3-phosphoethanolamine(out) + ATP + H2O = a 1,2-diacyl-sn-glycero-3-phosphoethanolamine(in) + ADP + phosphate + H(+). The catalysed reaction is N-11-cis-retinylidenephosphatidylethanolamine(out) + ATP + H2O = N-11-cis-retinylidenephosphatidylethanolamine(in) + ADP + phosphate + H(+). It catalyses the reaction ATP + H2O = ADP + phosphate + H(+). Its activity is regulated as follows. ATPase activity is decreased by cholesterol and ceramide. Phospholipids translocase activity is highly reduced by berylium fluoride and aluminum floride. N-ethylmaleimide inhibits phospholipid translocase activity. In terms of biological role, flippase that catalyzes in an ATP-dependent manner the transport of retinal-phosphatidylethanolamine conjugates like the 11-cis and all-trans isomers of N-retinylidene-phosphatidylethanolamine from the lumen to the cytoplasmic leaflet of photoreceptor outer segment disk membranes, where N-cis-retinylidene-phosphatidylethanolamine (N-cis-R-PE) is then isomerized to its all-trans isomer (N-trans-R-PE) and reduced by RDH8 to produce all-trans-retinol (all-trans-rol) and therefore prevents the accumulation of excess of 11-cis-retinal and its schiff-base conjugate and the formation of toxic bisretinoid. Displays ATPase activity in vitro in absence of retinal substrate. May display GTPase activity that is strongly influenced by the lipid environment and the presence of retinoid compounds. Binds the unprotonated form of N-retinylidene-phosphatidylethanolamine with high affinity in the absence of ATP and ATP binding and hydrolysis induce a protein conformational change that causes the dissociation of N-retinylidene-phosphatidylethanolamine. This is Retinal-specific phospholipid-transporting ATPase ABCA4 from Mus musculus (Mouse).